The following is an 81-amino-acid chain: MDTSLKNNDGALDADNKNYQDYKDEPDKTSDVLDVTKYNSMVDCCHKNYSTFTSEWYINERKYNDVPEGPKKADVHRCTII.

The disordered stretch occupies residues 1–28 (MDTSLKNNDGALDADNKNYQDYKDEPDK). Residues 14-28 (ADNKNYQDYKDEPDK) are compositionally biased toward basic and acidic residues.

The protein belongs to the asfivirus L83L family. Interacts with host IL1B.

The protein localises to the host cytoplasm. Its function is as follows. May subvert the host innate immune response by interacting with host IL1B and interfering with its function. The polypeptide is Protein L83L (African swine fever virus (isolate Tick/South Africa/Pretoriuskop Pr4/1996) (ASFV)).